The following is a 171-amino-acid chain: 3-hydroxydecanoyl-[acyl-carrier-protein] dehydratase (171 aa).

Residue histidine 70 is part of the active site.

Belongs to the thioester dehydratase family. FabA subfamily. In terms of assembly, homodimer.

The protein localises to the cytoplasm. It carries out the reaction a (3R)-hydroxyacyl-[ACP] = a (2E)-enoyl-[ACP] + H2O. The catalysed reaction is (3R)-hydroxydecanoyl-[ACP] = (2E)-decenoyl-[ACP] + H2O. It catalyses the reaction (2E)-decenoyl-[ACP] = (3Z)-decenoyl-[ACP]. It functions in the pathway lipid metabolism; fatty acid biosynthesis. In terms of biological role, necessary for the introduction of cis unsaturation into fatty acids. Catalyzes the dehydration of (3R)-3-hydroxydecanoyl-ACP to E-(2)-decenoyl-ACP and then its isomerization to Z-(3)-decenoyl-ACP. Can catalyze the dehydratase reaction for beta-hydroxyacyl-ACPs with saturated chain lengths up to 16:0, being most active on intermediate chain length. The protein is 3-hydroxydecanoyl-[acyl-carrier-protein] dehydratase of Xanthomonas axonopodis pv. citri (strain 306).